The primary structure comprises 271 residues: NAD kinase (271 aa).

D52 functions as the Proton acceptor in the catalytic mechanism. Residues 52 to 53 (DG), 129 to 130 (NE), R155, D157, and A192 contribute to the NAD(+) site.

This sequence belongs to the NAD kinase family. A divalent metal cation serves as cofactor.

The protein resides in the cytoplasm. It carries out the reaction NAD(+) + ATP = ADP + NADP(+) + H(+). Functionally, involved in the regulation of the intracellular balance of NAD and NADP, and is a key enzyme in the biosynthesis of NADP. Catalyzes specifically the phosphorylation on 2'-hydroxyl of the adenosine moiety of NAD to yield NADP. This is NAD kinase from Geobacillus stearothermophilus (Bacillus stearothermophilus).